The chain runs to 226 residues: Large ribosomal subunit protein uL1 (226 aa).

Belongs to the universal ribosomal protein uL1 family. In terms of assembly, part of the 50S ribosomal subunit.

Functionally, binds directly to 23S rRNA. Probably involved in E site tRNA release. Protein L1 is also a translational repressor protein, it controls the translation of its operon by binding to its mRNA. The sequence is that of Large ribosomal subunit protein uL1 from Korarchaeum cryptofilum (strain OPF8).